Consider the following 190-residue polypeptide: Shikimate kinase (190 aa).

19 to 24 contacts ATP; it reads GSGKTT. Mg(2+) is bound at residue Thr-23. Substrate-binding residues include Asp-41, Arg-65, and Gly-87. Arg-124 contacts ATP. Position 143 (Arg-143) interacts with substrate.

The protein belongs to the shikimate kinase family. Monomer. The cofactor is Mg(2+).

The protein resides in the cytoplasm. The catalysed reaction is shikimate + ATP = 3-phosphoshikimate + ADP + H(+). It participates in metabolic intermediate biosynthesis; chorismate biosynthesis; chorismate from D-erythrose 4-phosphate and phosphoenolpyruvate: step 5/7. Functionally, catalyzes the specific phosphorylation of the 3-hydroxyl group of shikimic acid using ATP as a cosubstrate. The sequence is that of Shikimate kinase from Synechococcus sp. (strain ATCC 27144 / PCC 6301 / SAUG 1402/1) (Anacystis nidulans).